The sequence spans 173 residues: U1 small nuclear ribonucleoprotein C (173 aa).

The segment at 4-36 adopts a Matrin-type zinc-finger fold; it reads YYCDYCDTYLTHDSPSVRKTHCQGRKHKDNVKF. The tract at residues 72–100 is disordered; it reads AAIPPPANMQGPPRPVPPGPMGPGPNMLG. Positions 73–94 are enriched in pro residues; sequence AIPPPANMQGPPRPVPPGPMGP.

This sequence belongs to the U1 small nuclear ribonucleoprotein C family. U1 snRNP is composed of the 7 core Sm proteins B/B', D1, D2, D3, E, F and G that assemble in a heptameric protein ring on the Sm site of the small nuclear RNA to form the core snRNP, and at least 3 U1 snRNP-specific proteins U1-70K, U1-A and U1-C. U1-C interacts with U1 snRNA and the 5' splice-site region of the pre-mRNA.

The protein localises to the nucleus. Component of the spliceosomal U1 snRNP, which is essential for recognition of the pre-mRNA 5' splice-site and the subsequent assembly of the spliceosome. U1-C is directly involved in initial 5' splice-site recognition for both constitutive and regulated alternative splicing. The interaction with the 5' splice-site seems to precede base-pairing between the pre-mRNA and the U1 snRNA. Stimulates commitment or early (E) complex formation by stabilizing the base pairing of the 5' end of the U1 snRNA and the 5' splice-site region. The polypeptide is U1 small nuclear ribonucleoprotein C (Pediculus humanus subsp. corporis (Body louse)).